We begin with the raw amino-acid sequence, 88 residues long: MGKVAAKIKVMPESPEVDLDDLQERLEGVLPEGTKINGFEREDVAFGLVALTPTVIVPDDTGGTEAVEEAFANVDDVESVSIESTGRL.

This sequence belongs to the EF-1-beta/EF-1-delta family.

Functionally, promotes the exchange of GDP for GTP in EF-1-alpha/GDP, thus allowing the regeneration of EF-1-alpha/GTP that could then be used to form the ternary complex EF-1-alpha/GTP/AAtRNA. The polypeptide is Elongation factor 1-beta (Haloarcula marismortui (strain ATCC 43049 / DSM 3752 / JCM 8966 / VKM B-1809) (Halobacterium marismortui)).